Consider the following 537-residue polypeptide: Organic anion transporter 3 (537 aa).

Over 1 to 11 the chain is Cytoplasmic; sequence MTFSEILDRVG. At serine 4 the chain carries Phosphoserine. A helical membrane pass occupies residues 12 to 32; the sequence is SMGPFQYLHVTLLALPILGIA. The Extracellular portion of the chain corresponds to 33-123; that stretch reads NHNLLQIFTA…LVCGSNKLKE (91 aa). The N-linked (GlcNAc...) asparagine glycan is linked to asparagine 81. Residues 124 to 144 form a helical membrane-spanning segment; it reads MAQSVFMAGILVGGPVFGELS. The Cytoplasmic segment spans residues 145–150; it reads DRFGRK. Residues 151 to 171 traverse the membrane as a helical segment; sequence PILTWSYLLLAASGSSAAFSP. Topologically, residues 172–176 are extracellular; that stretch reads SLTVY. The chain crosses the membrane as a helical span at residues 177-197; sequence MIFRFLCGCSISGISLSTIIL. The Cytoplasmic portion of the chain corresponds to 198–212; it reads NVEWVPTSTRAISST. A helical transmembrane segment spans residues 213-233; sequence TIGYCYTIGQFILPGLAYAVP. Over 234-236 the chain is Extracellular; it reads QWR. A helical transmembrane segment spans residues 237–257; that stretch reads WLQLSVSAAFFIFSLLSWWVP. The Cytoplasmic segment spans residues 258 to 327; that stretch reads ESIRWLVLSG…FRVSILRRVT (70 aa). A helical membrane pass occupies residues 328–348; that stretch reads FCLSLAWFATGFAYYSLAMGV. Residues 349–354 are Extracellular-facing; that stretch reads EEFGVN. Residues 355–375 traverse the membrane as a helical segment; sequence IYILQIIFGGVDIPAKFITIL. At 376–383 the chain is on the cytoplasmic side; that stretch reads SISYLGRR. Residues 384 to 404 form a helical membrane-spanning segment; that stretch reads ITQGFLLILAGVAILALIFVS. Over 405–411 the chain is Extracellular; sequence SEMQLLR. Residues 412–432 traverse the membrane as a helical segment; the sequence is TALAVFGKGCLSGSFSCLFLY. Residues 433–471 lie on the Cytoplasmic side of the membrane; it reads TSELYPTVLRQTGMGISNIWARVGSMIAPLVKITGELQP. A helical membrane pass occupies residues 472-492; it reads FIPNVIFGTMTLLGGSAAFFL. At 493-537 the chain is on the extracellular side; it reads LETLNRPLPETIEDIQDWYQQTKKTKQEPEAEKASQTIPLKTGGP. Residues 513–537 are disordered; that stretch reads QTKKTKQEPEAEKASQTIPLKTGGP.

Belongs to the major facilitator (TC 2.A.1) superfamily. Organic cation transporter (TC 2.A.1.19) family. In terms of tissue distribution, expressed mainly in kidney. In kidney, detected in almost all parts of the nephron, including macula densa cells. Expressed (at protein level) throughout the renal cortex. Widely distributed in the brain with no large regional differences. Expressed in the choroid plexus (CP, located in the ventricles of the brain). Expressed in developing bone. Weakly expressed in brain and eye.

Its subcellular location is the basolateral cell membrane. It catalyses the reaction estrone 3-sulfate(out) + glutarate(in) = estrone 3-sulfate(in) + glutarate(out). The catalysed reaction is estrone 3-sulfate(in) + 2-oxoglutarate(out) = estrone 3-sulfate(out) + 2-oxoglutarate(in). It carries out the reaction taurocholate(out) + glutarate(in) = taurocholate(in) + glutarate(out). The enzyme catalyses dehydroepiandrosterone 3-sulfate(out) + glutarate(in) = dehydroepiandrosterone 3-sulfate(in) + glutarate(out). It catalyses the reaction glutarate(in) + 2-oxoglutarate(out) = glutarate(out) + 2-oxoglutarate(in). The catalysed reaction is urate(in) + 2-oxoglutarate(out) = urate(out) + 2-oxoglutarate(in). It carries out the reaction prostaglandin F2alpha(out) + glutarate(in) = prostaglandin F2alpha(in) + glutarate(out). The enzyme catalyses prostaglandin F2alpha(out) + 2-oxoglutarate(in) = prostaglandin F2alpha(in) + 2-oxoglutarate(out). It catalyses the reaction (R)-carnitine(out) + 2-oxoglutarate(in) = (R)-carnitine(in) + 2-oxoglutarate(out). The catalysed reaction is glutarate(in) + (R)-carnitine(out) = glutarate(out) + (R)-carnitine(in). It carries out the reaction prostaglandin E2(out) + 2-oxoglutarate(in) = prostaglandin E2(in) + 2-oxoglutarate(out). The enzyme catalyses prostaglandin E2(out) + glutarate(in) = prostaglandin E2(in) + glutarate(out). It catalyses the reaction urate(in) + glutarate(out) = urate(out) + glutarate(in). The catalysed reaction is taurocholate(out) + 2-oxoglutarate(in) = taurocholate(in) + 2-oxoglutarate(out). It carries out the reaction dehydroepiandrosterone 3-sulfate(out) + 2-oxoglutarate(in) = dehydroepiandrosterone 3-sulfate(in) + 2-oxoglutarate(out). The enzyme catalyses kynurenate(out) + a dicarboxylate(in) = kynurenate(in) + a dicarboxylate(out). It catalyses the reaction (indol-3-yl)acetate(out) + a dicarboxylate(in) = (indol-3-yl)acetate(in) + a dicarboxylate(out). The catalysed reaction is indoxyl sulfate(out) + a dicarboxylate(in) = indoxyl sulfate(in) + a dicarboxylate(out). It carries out the reaction N-benzoylglycine(out) + a dicarboxylate(in) = N-benzoylglycine(in) + a dicarboxylate(out). The enzyme catalyses 3-carboxy-4-methyl-5-propyl-2-furanpropanoate(out) + a dicarboxylate(in) = 3-carboxy-4-methyl-5-propyl-2-furanpropanoate(in) + a dicarboxylate(out). It catalyses the reaction (6R)-L-erythro-5,6,7,8-tetrahydrobiopterin(out) + a dicarboxylate(in) = (6R)-L-erythro-5,6,7,8-tetrahydrobiopterin(in) + a dicarboxylate(out). The catalysed reaction is L-erythro-7,8-dihydrobiopterin(out) + a dicarboxylate(in) = L-erythro-7,8-dihydrobiopterin(in) + a dicarboxylate(out). It carries out the reaction L-sepiapterin(out) + a dicarboxylate(in) = L-sepiapterin(in) + a dicarboxylate(out). Expression inhibited by androgens such as testosterone. In terms of biological role, functions as an organic anion/dicarboxylate exchanger that couples organic anion uptake indirectly to the sodium gradient. Transports organic anions such as estrone 3-sulfate (E1S) and urate in exchange for dicarboxylates such as glutarate or ketoglutarate (2-oxoglutarate). Plays an important role in the excretion of endogenous and exogenous organic anions, especially from the kidney and the brain. E1S transport is pH- and chloride-dependent and may also involve E1S/cGMP exchange. Responsible for the transport of prostaglandin E2 (PGE2) and prostaglandin F2(alpha) (PGF2(alpha)) in the basolateral side of the renal tubule. Involved in the transport of neuroactive tryptophan metabolites kynurenate and xanthurenate. Functions as a biopterin transporters involved in the uptake and the secretion of coenzymes tetrahydrobiopterin (BH4), dihydrobiopterin (BH2) and sepiapterin to urine, thereby determining baseline levels of blood biopterins. May be involved in the basolateral transport of steviol, a metabolite of the popular sugar substitute stevioside. May participate in the detoxification/ renal excretion of drugs and xenobiotics, such as the histamine H(2)-receptor antagonists fexofenadine and cimetidine, the antibiotic benzylpenicillin (PCG), the anionic herbicide 2,4-dichloro-phenoxyacetate (2,4-D), the diagnostic agent p-aminohippurate (PAH), the antiviral acyclovir (ACV), and the mycotoxin ochratoxin (OTA), by transporting these exogenous organic anions across the cell membrane in exchange for dicarboxylates such as 2-oxoglutarate. May contribute to the release of cortisol in the adrenals. Involved in one of the detoxification systems on the choroid plexus (CP), removes substrates such as E1S or taurocholate (TC), PCG, 2,4-D and PAH, from the cerebrospinal fluid (CSF) to the blood for eventual excretion in urine and bile. Also contributes to the uptake of several other organic compounds such as the prostanoids prostaglandin E(2) and prostaglandin F(2-alpha), L-carnitine, and the therapeutic drugs allopurinol, 6-mercaptopurine (6-MP) and 5-fluorouracil (5-FU). Mediates the transport of PAH, PCG, and the statins pravastatin and pitavastatin, from the cerebrum into the blood circulation across the blood-brain barrier (BBB). Contributes to the renal uptake of potent uremic toxins (indoxyl sulfate (IS), indole acetate (IA), hippurate/N-benzoylglycine (HA) and 3-carboxy-4-methyl-5-propyl-2-furanpropionate (CMPF)), pravastatin, PCG, E1S and dehydroepiandrosterone sulfate (DHEAS), and is partly involved in the renal uptake of temocaprilat (an angiotensin-converting enzyme (ACE) inhibitor). In summary, plays a role in the efflux of drugs and xenobiotics, helping reduce their undesired toxicological effects on the body. In Mus musculus (Mouse), this protein is Organic anion transporter 3 (Slc22a8).